The chain runs to 242 residues: Glucosamine-6-phosphate deaminase (242 aa).

The active-site Proton acceptor; for enolization step is the Asp-67. The For ring-opening step role is filled by Asn-136. His-138 (proton acceptor; for ring-opening step) is an active-site residue. Glu-143 acts as the For ring-opening step in catalysis.

The protein belongs to the glucosamine/galactosamine-6-phosphate isomerase family. NagB subfamily.

The catalysed reaction is alpha-D-glucosamine 6-phosphate + H2O = beta-D-fructose 6-phosphate + NH4(+). It functions in the pathway amino-sugar metabolism; N-acetylneuraminate degradation; D-fructose 6-phosphate from N-acetylneuraminate: step 5/5. In terms of biological role, catalyzes the reversible isomerization-deamination of glucosamine 6-phosphate (GlcN6P) to form fructose 6-phosphate (Fru6P) and ammonium ion. The sequence is that of Glucosamine-6-phosphate deaminase from Clostridium beijerinckii (strain ATCC 51743 / NCIMB 8052) (Clostridium acetobutylicum).